A 235-amino-acid chain; its full sequence is Small ribosomal subunit protein eS4 (235 aa).

The S4 RNA-binding domain maps to 37 to 110 (LPLGLIIRDV…KGRLVLYKLN (74 aa)).

Belongs to the eukaryotic ribosomal protein eS4 family.

This Methanosarcina mazei (strain ATCC BAA-159 / DSM 3647 / Goe1 / Go1 / JCM 11833 / OCM 88) (Methanosarcina frisia) protein is Small ribosomal subunit protein eS4.